The sequence spans 240 residues: Zein-alpha A20 (240 aa).

Residues M1–A21 form the signal peptide.

It belongs to the zein family.

Zeins are major seed storage proteins. The polypeptide is Zein-alpha A20 (Zea mays (Maize)).